The sequence spans 552 residues: Leiomodin-2 (552 aa).

Positions 1–47 (MSTFGYRRELSKYEDIDEDELLASLTEEELKELERELEDIEPDRNLP) are interaction with tropomyosin alpha. 2 interaction with actin regions span residues 1 to 169 (MSTF…SSHV) and 170 to 498 (RHKK…KEIK). Positions 13–46 (YEDIDEDELLASLTEEELKELERELEDIEPDRNL) form a coiled coil. 3 disordered regions span residues 33–67 (LERE…FSRE), 87–191 (GACE…DGKD), and 364–531 (MDKQ…DNLM). Polar residues predominate over residues 51–64 (RQKSLTEKTPTGTF). Residues 86–151 (LGACEKDSEQ…DDEDEEKQNS (66 aa)) adopt a coiled-coil conformation. Composition is skewed to acidic residues over residues 93–108 (SEQE…EECF) and 115–147 (VSEE…EDEE). Residues 364–377 (MDKQRQKRMQEQRQ) are compositionally biased toward basic and acidic residues. Positions 398–415 (PRSSPYTSPKSSPWSSPK) are enriched in low complexity. Pro residues predominate over residues 425 to 450 (SQPPAPAPPPPPPPPPPPPPPPPPVI). The span at 478–488 (QKKKKGKKGKK) shows a compositional bias: basic residues. Residues 489-513 (HENSILKEIKDSLKSVSDRKSEEGS) are compositionally biased toward basic and acidic residues. The span at 514–524 (RPSTRPSTPQR) shows a compositional bias: polar residues. The tract at residues 526–545 (LHDNLMEAIRASSIKQLRRV) is interaction with actin 3. Residues 526-545 (LHDNLMEAIRASSIKQLRRV) form the WH2 domain.

The protein belongs to the tropomodulin family. In terms of assembly, can bind at least three actin monomers and thereby provides a nucleus for actin filament formation. Interacts (via N-terminus) with tropomyosin alpha (TPM1) (via N-terminus). May also interact with TPM2 (via N-terminus).

Its subcellular location is the cytoplasm. It localises to the myofibril. The protein resides in the sarcomere. It is found in the m line. The protein localises to the cytoskeleton. In terms of biological role, mediates nucleation of actin filaments and thereby promotes actin polymerization. Plays a role in the regulation of actin filament length. Required for normal sarcomere organization in the heart, and for normal heart function. This chain is Leiomodin-2 (LMOD2), found in Gallus gallus (Chicken).